The following is a 416-amino-acid chain: Squalene synthase (416 aa).

The NADP(+) site is built by R52 and R77. 3 residues coordinate Mg(2+): D80, E83, and D84. R218 provides a ligand contact to NADP(+). A helical transmembrane segment spans residues S284–Y304. K315 and R317 together coordinate NADP(+). Residues P384–L404 form a helical membrane-spanning segment.

This sequence belongs to the phytoene/squalene synthase family. Mg(2+) serves as cofactor.

The protein localises to the endoplasmic reticulum membrane. The enzyme catalyses 2 (2E,6E)-farnesyl diphosphate + NADPH + H(+) = squalene + 2 diphosphate + NADP(+). It carries out the reaction 2 (2E,6E)-farnesyl diphosphate + NADH + H(+) = squalene + 2 diphosphate + NAD(+). It catalyses the reaction presqualene diphosphate + NADH + H(+) = squalene + diphosphate + NAD(+). The catalysed reaction is presqualene diphosphate + NADPH + H(+) = squalene + diphosphate + NADP(+). The enzyme catalyses 2 (2E,6E)-farnesyl diphosphate = presqualene diphosphate + diphosphate. It functions in the pathway terpene metabolism; lanosterol biosynthesis; lanosterol from farnesyl diphosphate: step 1/3. Functionally, catalyzes the condensation of 2 farnesyl pyrophosphate (FPP) moieties to form squalene. Proceeds in two distinct steps. In the first half-reaction, two molecules of FPP react to form the stable presqualene diphosphate intermediate (PSQPP), with concomitant release of a proton and a molecule of inorganic diphosphate. In the second half-reaction, PSQPP undergoes heterolysis, isomerization, and reduction with NADPH or NADH to form squalene. It is the first committed enzyme of the sterol biosynthesis pathway. The protein is Squalene synthase (Fdft1) of Rattus norvegicus (Rat).